The sequence spans 217 residues: Large ribosomal subunit protein uL1 (217 aa).

This sequence belongs to the universal ribosomal protein uL1 family. As to quaternary structure, component of the large ribosomal subunit.

The protein resides in the cytoplasm. Component of the large ribosomal subunit. The ribosome is a large ribonucleoprotein complex responsible for the synthesis of proteins in the cell. This is Large ribosomal subunit protein uL1 (rpl10a) from Xenopus laevis (African clawed frog).